We begin with the raw amino-acid sequence, 254 residues long: Methyl-CpG-binding domain-containing protein 11 (254 aa).

One can recognise an MBD domain in the interval 4 to 74 (EEEVVSVELP…AEFDWTTSGT (71 aa)). The interval 56-254 (KSHPGNPAIA…EKTAEGEATG (199 aa)) is disordered. Basic and acidic residues-rich tracts occupy residues 80 to 97 (RISEKTKATPSPDKEPPK), 107 to 130 (SKKDAEGEKSEGGGEENSHVKDTE), 151 to 162 (ETERVNDAKENI), and 178 to 254 (ESMK…EATG). Ser116 carries the phosphoserine modification.

As to expression, expressed in leaves (around hydathodes), buds, flowers (carpels and pollen grains), stems (around nodes), siliques, mature seeds and roots.

Its subcellular location is the nucleus. Functionally, transcriptional regulator that binds DNA independently of its methylation status. Required during plant organogenesis and development. The protein is Methyl-CpG-binding domain-containing protein 11 (MBD11) of Arabidopsis thaliana (Mouse-ear cress).